Consider the following 892-residue polypeptide: Translation initiation factor IF-2 (892 aa).

The segment at 51 to 296 (REHGSAPNKL…KGKRKPSTLQ (246 aa)) is disordered. The segment covering 68–82 (STLNIPSTGGKSKSV) has biased composition (polar residues). Over residues 99–217 (EQAKAEEQAQ…KMAAENEGKW (119 aa)) the composition is skewed to basic and acidic residues. Polar residues predominate over residues 224-237 (QTESADYHVTTSQH). Positions 239–254 (RAAEDENDAKVEGDRR) are enriched in basic and acidic residues. Residues 255–269 (SRTRGGKATKQKKGN) show a composition bias toward basic residues. Over residues 270–283 (KLSESKADREEARA) the composition is skewed to basic and acidic residues. Positions 391–560 (HRAPVVTIMG…LLQAEVMELK (170 aa)) constitute a tr-type G domain. The G1 stretch occupies residues 400–407 (GHVDHGKT). A GTP-binding site is contributed by 400-407 (GHVDHGKT). A G2 region spans residues 425–429 (GITQH). The interval 446 to 449 (DTPG) is G3. GTP-binding positions include 446 to 450 (DTPGH) and 500 to 503 (NKID). The G4 stretch occupies residues 500 to 503 (NKID). Residues 536–538 (SAK) are G5.

The protein belongs to the TRAFAC class translation factor GTPase superfamily. Classic translation factor GTPase family. IF-2 subfamily.

It is found in the cytoplasm. Its function is as follows. One of the essential components for the initiation of protein synthesis. Protects formylmethionyl-tRNA from spontaneous hydrolysis and promotes its binding to the 30S ribosomal subunits. Also involved in the hydrolysis of GTP during the formation of the 70S ribosomal complex. The sequence is that of Translation initiation factor IF-2 from Yersinia enterocolitica serotype O:8 / biotype 1B (strain NCTC 13174 / 8081).